Consider the following 288-residue polypeptide: 33 kDa chaperonin (288 aa).

2 disulfides stabilise this stretch: C233/C235 and C267/C270.

The protein belongs to the HSP33 family. Post-translationally, under oxidizing conditions two disulfide bonds are formed involving the reactive cysteines. Under reducing conditions zinc is bound to the reactive cysteines and the protein is inactive.

The protein resides in the cytoplasm. Functionally, redox regulated molecular chaperone. Protects both thermally unfolding and oxidatively damaged proteins from irreversible aggregation. Plays an important role in the bacterial defense system toward oxidative stress. The protein is 33 kDa chaperonin of Actinobacillus succinogenes (strain ATCC 55618 / DSM 22257 / CCUG 43843 / 130Z).